Consider the following 256-residue polypeptide: Thiazole synthase (256 aa).

Lys-95 functions as the Schiff-base intermediate with DXP in the catalytic mechanism. Residues Gly-156, Ala-182–Gly-183, and Asn-204–Thr-205 contribute to the 1-deoxy-D-xylulose 5-phosphate site.

This sequence belongs to the ThiG family. In terms of assembly, homotetramer. Forms heterodimers with either ThiH or ThiS.

The protein resides in the cytoplasm. The enzyme catalyses [ThiS sulfur-carrier protein]-C-terminal-Gly-aminoethanethioate + 2-iminoacetate + 1-deoxy-D-xylulose 5-phosphate = [ThiS sulfur-carrier protein]-C-terminal Gly-Gly + 2-[(2R,5Z)-2-carboxy-4-methylthiazol-5(2H)-ylidene]ethyl phosphate + 2 H2O + H(+). The protein operates within cofactor biosynthesis; thiamine diphosphate biosynthesis. Its function is as follows. Catalyzes the rearrangement of 1-deoxy-D-xylulose 5-phosphate (DXP) to produce the thiazole phosphate moiety of thiamine. Sulfur is provided by the thiocarboxylate moiety of the carrier protein ThiS. In vitro, sulfur can be provided by H(2)S. In Enterobacter sp. (strain 638), this protein is Thiazole synthase.